Consider the following 875-residue polypeptide: DNA mismatch repair protein MutS (875 aa).

625 to 632 is an ATP binding site; sequence GPNMGGKS.

Belongs to the DNA mismatch repair MutS family.

Functionally, this protein is involved in the repair of mismatches in DNA. It is possible that it carries out the mismatch recognition step. This protein has a weak ATPase activity. This Symbiobacterium thermophilum (strain DSM 24528 / JCM 14929 / IAM 14863 / T) protein is DNA mismatch repair protein MutS.